An 883-amino-acid polypeptide reads, in one-letter code: DNA mismatch repair protein MutS (883 aa).

619 to 626 (GPNMGGKS) contacts ATP.

It belongs to the DNA mismatch repair MutS family.

Its function is as follows. This protein is involved in the repair of mismatches in DNA. It is possible that it carries out the mismatch recognition step. This protein has a weak ATPase activity. The polypeptide is DNA mismatch repair protein MutS (Marinomonas sp. (strain MWYL1)).